Reading from the N-terminus, the 616-residue chain is MAU2 chromatid cohesion factor homolog (616 aa).

3 TPR repeats span residues 90-123 (FDTASLLAQLYQQQEQSSLAKPVLRKAIELSQHN), 445-478 (GSFYYVQGLNAFHKSSFHEAKRFLRETLKMANAE), and 485-518 (SCSLVLLSHVFLSIGNSKESMNMVTPAMQLASKI).

The protein belongs to the SCC4/mau-2 family. As to quaternary structure, component of the cohesin loading complex.

The protein localises to the nucleus. It is found in the nucleoplasm. In terms of biological role, required for association of the cohesin complex with chromatin during interphase. Plays a role in sister chromatid cohesion and normal progression through prometaphase. The sequence is that of MAU2 chromatid cohesion factor homolog from Culex quinquefasciatus (Southern house mosquito).